Here is a 210-residue protein sequence, read N- to C-terminus: ATP-dependent Clp protease proteolytic subunit (210 aa).

Residue Ser-107 is the Nucleophile of the active site. The active site involves His-132.

The protein belongs to the peptidase S14 family. Fourteen ClpP subunits assemble into 2 heptameric rings which stack back to back to give a disk-like structure with a central cavity, resembling the structure of eukaryotic proteasomes.

It is found in the cytoplasm. The catalysed reaction is Hydrolysis of proteins to small peptides in the presence of ATP and magnesium. alpha-casein is the usual test substrate. In the absence of ATP, only oligopeptides shorter than five residues are hydrolyzed (such as succinyl-Leu-Tyr-|-NHMec, and Leu-Tyr-Leu-|-Tyr-Trp, in which cleavage of the -Tyr-|-Leu- and -Tyr-|-Trp bonds also occurs).. In terms of biological role, cleaves peptides in various proteins in a process that requires ATP hydrolysis. Has a chymotrypsin-like activity. Plays a major role in the degradation of misfolded proteins. The protein is ATP-dependent Clp protease proteolytic subunit of Chromobacterium violaceum (strain ATCC 12472 / DSM 30191 / JCM 1249 / CCUG 213 / NBRC 12614 / NCIMB 9131 / NCTC 9757 / MK).